Consider the following 335-residue polypeptide: MMWVAVDVMSGDYGPEKIIEGAVNAVNQDGANVVLVGKEEEIGEILLKFEYDTNKVRIQHASEIIDMNDSPSIAVRTLQDSSIVQATQIVADKTCVGMFSPGNTGATMASALLYLGRIPGVLRPPIAAPIPQENGPPMLLVDAGANVDCKPDYLAQFAVMGEIYSKLIFNILNPKVGILSNGEEDKKGNTVSLKAFEMIKKLPINFVGNVEGRDLYGSGKDVDVVVCDGFIGNIVLKATEGLSKSIFNVLRESIKQSSLAQTGALLLKPTLGAIKKRLDYAEYGGALLLGVDGICLIGHGSSNALAVQSAIRVAVECAQHQINDRIAADLKKYNI.

This sequence belongs to the PlsX family. Homodimer. Probably interacts with PlsY.

Its subcellular location is the cytoplasm. The catalysed reaction is a fatty acyl-[ACP] + phosphate = an acyl phosphate + holo-[ACP]. It participates in lipid metabolism; phospholipid metabolism. Catalyzes the reversible formation of acyl-phosphate (acyl-PO(4)) from acyl-[acyl-carrier-protein] (acyl-ACP). This enzyme utilizes acyl-ACP as fatty acyl donor, but not acyl-CoA. The protein is Phosphate acyltransferase of Leptospira interrogans serogroup Icterohaemorrhagiae serovar copenhageni (strain Fiocruz L1-130).